Here is a 78-residue protein sequence, read N- to C-terminus: Exodeoxyribonuclease 7 small subunit (78 aa).

Belongs to the XseB family. As to quaternary structure, heterooligomer composed of large and small subunits.

It localises to the cytoplasm. The catalysed reaction is Exonucleolytic cleavage in either 5'- to 3'- or 3'- to 5'-direction to yield nucleoside 5'-phosphates.. In terms of biological role, bidirectionally degrades single-stranded DNA into large acid-insoluble oligonucleotides, which are then degraded further into small acid-soluble oligonucleotides. This chain is Exodeoxyribonuclease 7 small subunit, found in Desulfitobacterium hafniense (strain Y51).